Consider the following 337-residue polypeptide: MLIKLPSASGSKESDVTPESIYLSRRTLLASSLAGLAVTALPRWASAADASRYADVEAGKAPGWFADKLPSTQWQAVTVKDEAITPFKDATHYNNFYEFGTDKGDPAKNAGSLKTEPWTVVIDGEVGKPGRYALEDFMKPYQLEERIYRLRCVEAWSMVIPWIGFPISALLKQVEPTSKAKYIRFETLEDAKSMPGQRSDFALIDWPYVEGLRLDEAMNPLAILAVGMYGRELPNQNGAPLRLVVPWKYGFKSVKSIVRISLVSEQPKTTWQSIAANEYGFYANVNPMVDHPRWTQARERRLPSGLFSPNLRETKMFNGYEEEVGSLYAGMNLRKDY.

A signal peptide (tat-type signal) is located at residues 1 to 50 (MLIKLPSASGSKESDVTPESIYLSRRTLLASSLAGLAVTALPRWASAADA). Residues Asn-94, 97 to 98 (YE), Cys-152, Thr-187, Asn-237, Arg-242, and 253 to 255 (SVK) each bind Mo-molybdopterin.

It belongs to the MsrP family. Heterodimer of a catalytic subunit (MsrP) and a heme-binding subunit (MsrQ). Mo-molybdopterin serves as cofactor. In terms of processing, predicted to be exported by the Tat system. The position of the signal peptide cleavage has not been experimentally proven.

The protein localises to the periplasm. It carries out the reaction L-methionyl-[protein] + a quinone + H2O = L-methionyl-(S)-S-oxide-[protein] + a quinol. It catalyses the reaction L-methionyl-[protein] + a quinone + H2O = L-methionyl-(R)-S-oxide-[protein] + a quinol. Part of the MsrPQ system that repairs oxidized periplasmic proteins containing methionine sulfoxide residues (Met-O), using respiratory chain electrons. Thus protects these proteins from oxidative-stress damage caused by reactive species of oxygen and chlorine generated by the host defense mechanisms. MsrPQ is essential for the maintenance of envelope integrity under bleach stress, rescuing a wide series of structurally unrelated periplasmic proteins from methionine oxidation. The catalytic subunit MsrP is non-stereospecific, being able to reduce both (R-) and (S-) diastereoisomers of methionine sulfoxide. This Pseudomonas syringae pv. tomato (strain ATCC BAA-871 / DC3000) protein is Protein-methionine-sulfoxide reductase catalytic subunit MsrP.